Consider the following 20-residue polypeptide: Unknown protein NF042 from 2D-PAGE (20 aa).

In Naegleria fowleri (Brain eating amoeba), this protein is Unknown protein NF042 from 2D-PAGE.